A 392-amino-acid polypeptide reads, in one-letter code: Probable tRNA pseudouridine synthase D 1 (392 aa).

Residue D92 is the Nucleophile of the active site. One can recognise a TRUD domain in the interval 167–354 (YFLNYYGVQR…FIGDRRAMIG (188 aa)).

This sequence belongs to the pseudouridine synthase TruD family.

The enzyme catalyses uridine(13) in tRNA = pseudouridine(13) in tRNA. In terms of biological role, could be responsible for synthesis of pseudouridine from uracil-13 in transfer RNAs. In Methanocaldococcus jannaschii (strain ATCC 43067 / DSM 2661 / JAL-1 / JCM 10045 / NBRC 100440) (Methanococcus jannaschii), this protein is Probable tRNA pseudouridine synthase D 1.